The chain runs to 427 residues: Enolase (427 aa).

Glutamine 163 is a binding site for (2R)-2-phosphoglycerate. Glutamate 205 (proton donor) is an active-site residue. 3 residues coordinate Mg(2+): aspartate 242, glutamate 285, and aspartate 312. Lysine 337, arginine 366, serine 367, and lysine 388 together coordinate (2R)-2-phosphoglycerate. The active-site Proton acceptor is lysine 337.

This sequence belongs to the enolase family. Mg(2+) is required as a cofactor.

It localises to the cytoplasm. It is found in the secreted. The protein resides in the cell surface. The enzyme catalyses (2R)-2-phosphoglycerate = phosphoenolpyruvate + H2O. Its pathway is carbohydrate degradation; glycolysis; pyruvate from D-glyceraldehyde 3-phosphate: step 4/5. Its function is as follows. Catalyzes the reversible conversion of 2-phosphoglycerate (2-PG) into phosphoenolpyruvate (PEP). It is essential for the degradation of carbohydrates via glycolysis. This chain is Enolase, found in Rhodopseudomonas palustris (strain HaA2).